The following is a 455-amino-acid chain: Golgi pH regulator (455 aa).

Transmembrane regions (helical) follow at residues 5–25 (ADSV…WLFF) and 46–66 (VTFA…LGLL). Asn-67 is a glycosylation site (N-linked (GlcNAc...) asparagine). The next 3 helical transmembrane spans lie at 79-99 (LCVI…YFVV), 111-131 (LFSC…GDPF), and 150-170 (VGVI…VNCP). N-linked (GlcNAc...) asparagine glycosylation occurs at Asn-180. Transmembrane regions (helical) follow at residues 290–310 (GYFF…NIVF), 343–363 (ISFI…LITL), 378–398 (VIVL…VLLI), and 425–445 (WFDV…YLAH).

It belongs to the Golgi pH regulator (TC 1.A.38) family. As to quaternary structure, homotrimer.

Its subcellular location is the golgi apparatus membrane. It catalyses the reaction iodide(out) = iodide(in). The catalysed reaction is chloride(in) = chloride(out). The enzyme catalyses bromide(in) = bromide(out). It carries out the reaction fluoride(in) = fluoride(out). Its function is as follows. Voltage-gated channel that enables the transfer of anions such as iodide, chloride, bromide and fluoride which may function in counter-ion conductance and participates in Golgi acidification. The polypeptide is Golgi pH regulator (gpr89-b) (Xenopus laevis (African clawed frog)).